Consider the following 395-residue polypeptide: Vascular endothelial growth factor A, long form (395 aa).

Disordered regions lie at residues 1–45 (MTDR…VEGV) and 73–175 (EAEP…AGPG). The span at 73–85 (EAEPSGAARSASS) shows a compositional bias: low complexity. A compositionally biased stretch (acidic residues) spans 91–102 (QPEEGEEEEEKE). Low complexity-rich tracts occupy residues 123–143 (AAVC…ARAS) and 165–175 (RRGSASRAGPG). Disulfide bonds link C232/C274, C263/C308, and C267/C310. The N-linked (GlcNAc...) asparagine glycan is linked to N281. Residues 314 to 323 (KDRARQEKKS) are compositionally biased toward basic and acidic residues. The segment at 314–344 (KDRARQEKKSVRGKGKGQKRKRKKSRYKSWS) is disordered. Basic residues predominate over residues 324-340 (VRGKGKGQKRKRKKSRY).

Belongs to the PDGF/VEGF growth factor family. In terms of assembly, homodimer; disulfide-linked. Also found as heterodimer with PGF. Interacts with NRP1. Interacts with isoform 2 of BSG. Interacts with CD82; this interaction inhibits VEGFA-mediated signaling pathway. Produced by use of an alternative upstream CUG codon and post-translationally processed into the N-terminal N-VEGF form and the C-terminal secreted VEGFA form. In terms of tissue distribution, higher expression in pituitary tumors than the pituitary gland. Widely expressed. As to expression, not widely expressed.

The protein localises to the cytoplasm. It is found in the nucleus. It localises to the secreted. The protein resides in the endoplasmic reticulum. Its subcellular location is the golgi apparatus. The protein localises to the extracellular space. It is found in the extracellular matrix. Participates in the induction of key genes involved in the response to hypoxia and in the induction of angiogenesis such as HIF1A. Involved in protecting cells from hypoxia-mediated cell death. Functionally, growth factor active in angiogenesis, vasculogenesis and endothelial cell growth. Induces endothelial cell proliferation, promotes cell migration, inhibits apoptosis and induces permeabilization of blood vessels. Binds to the FLT1/VEGFR1 and KDR/VEGFR2 receptors, heparan sulfate and heparin. Binds to the NRP1/neuropilin-1 receptor. Binding to NRP1 initiates a signaling pathway needed for motor neuron axon guidance and cell body migration, including for the caudal migration of facial motor neurons from rhombomere 4 to rhombomere 6 during embryonic development. Also binds the DEAR/FBXW7-AS1 receptor. In terms of biological role, binds to the KDR receptor but does not activate downstream signaling pathways, does not activate angiogenesis and inhibits tumor growth. The polypeptide is Vascular endothelial growth factor A, long form (VEGFA) (Homo sapiens (Human)).